The following is a 597-amino-acid chain: Alpha-1,2-mannosyltransferase MNN2 (597 aa).

At 1–6 the chain is on the cytoplasmic side; sequence MIAKQK. A helical transmembrane segment spans residues 7–27; it reads IKILIGVIIVIATYHFIVSSN. Topologically, residues 28–597 are extracellular; that stretch reads VRSKDLSDLV…ETAEIPTVVS (570 aa). The segment at 39-89 is disordered; the sequence is LGSSDKSTTENERPKNNIVTNNRLDNPPNEDIPHAEPDSPPQEPPKSGNKP. N-linked (GlcNAc...) asparagine glycosylation occurs at Asn382.

The protein belongs to the MNN1/MNT family. Requires Mn(2+) as cofactor.

The protein localises to the golgi apparatus membrane. Its pathway is protein modification; protein glycosylation. Its activity is regulated as follows. Enzyme activity is regulated by iron. Alpha-1,2-mannosyltransferase required for cell wall integrity. Responsible for addition of the first alpha-1,2-linked mannose to form the branches on the mannan backbone of oligosaccharides. Addition of alpha-1,2-mannose is required for stabilization of the alpha-1,6-mannose backbone and hence regulates mannan fibril length; and is important for both immune recognition and virulence. Promotes iron uptake and usage along the endocytosis pathway under iron-limiting conditions. The protein is Alpha-1,2-mannosyltransferase MNN2 (MNN2) of Candida albicans (strain SC5314 / ATCC MYA-2876) (Yeast).